The sequence spans 103 residues: N(4)-acetylcytidine amidohydrolase (103 aa).

Residues 6 to 94 form the ASCH domain; it reads ITFFQRFQND…IAEIYPNQTQ (89 aa). K21 serves as the catalytic Proton acceptor. The Nucleophile role is filled by T24. E74 serves as the catalytic Proton donor.

It belongs to the N(4)-acetylcytidine amidohydrolase family.

It catalyses the reaction N(4)-acetylcytidine + H2O = cytidine + acetate + H(+). It carries out the reaction N(4)-acetyl-2'-deoxycytidine + H2O = 2'-deoxycytidine + acetate + H(+). The catalysed reaction is N(4)-acetylcytosine + H2O = cytosine + acetate + H(+). In terms of biological role, catalyzes the hydrolysis of N(4)-acetylcytidine (ac4C). In Salmonella heidelberg (strain SL476), this protein is N(4)-acetylcytidine amidohydrolase (yqfB).